Reading from the N-terminus, the 396-residue chain is S-adenosylmethionine synthase (396 aa).

Position 14 (H14) interacts with ATP. D16 serves as a coordination point for Mg(2+). E42 contacts K(+). L-methionine-binding residues include E55 and Q98. A flexible loop region spans residues 98-108 (QSPDIALGVNK). Residues 174-176 (DGK), 241-242 (RF), D250, 256-257 (RK), A273, and K277 each bind ATP. L-methionine is bound at residue D250. An L-methionine-binding site is contributed by K281.

It belongs to the AdoMet synthase family. As to quaternary structure, homotetramer; dimer of dimers. Requires Mg(2+) as cofactor. It depends on K(+) as a cofactor.

The protein localises to the cytoplasm. It carries out the reaction L-methionine + ATP + H2O = S-adenosyl-L-methionine + phosphate + diphosphate. It functions in the pathway amino-acid biosynthesis; S-adenosyl-L-methionine biosynthesis; S-adenosyl-L-methionine from L-methionine: step 1/1. Catalyzes the formation of S-adenosylmethionine (AdoMet) from methionine and ATP. The overall synthetic reaction is composed of two sequential steps, AdoMet formation and the subsequent tripolyphosphate hydrolysis which occurs prior to release of AdoMet from the enzyme. In Pseudothermotoga lettingae (strain ATCC BAA-301 / DSM 14385 / NBRC 107922 / TMO) (Thermotoga lettingae), this protein is S-adenosylmethionine synthase.